Reading from the N-terminus, the 208-residue chain is Probable nicotinate-nucleotide adenylyltransferase (208 aa).

It belongs to the NadD family.

The enzyme catalyses nicotinate beta-D-ribonucleotide + ATP + H(+) = deamido-NAD(+) + diphosphate. It functions in the pathway cofactor biosynthesis; NAD(+) biosynthesis; deamido-NAD(+) from nicotinate D-ribonucleotide: step 1/1. Its function is as follows. Catalyzes the reversible adenylation of nicotinate mononucleotide (NaMN) to nicotinic acid adenine dinucleotide (NaAD). This is Probable nicotinate-nucleotide adenylyltransferase from Kineococcus radiotolerans (strain ATCC BAA-149 / DSM 14245 / SRS30216).